The primary structure comprises 185 residues: Large ribosomal subunit protein uL5c (185 aa).

It belongs to the universal ribosomal protein uL5 family. As to quaternary structure, part of the 50S ribosomal subunit; contacts the 5S rRNA.

It localises to the plastid. It is found in the chloroplast. Its function is as follows. Binds 5S rRNA, forms part of the central protuberance of the 50S subunit. The chain is Large ribosomal subunit protein uL5c (rpl5) from Chlorokybus atmophyticus (Soil alga).